We begin with the raw amino-acid sequence, 482 residues long: Adenylyltransferase and sulfurtransferase uba4 (482 aa).

The tract at residues 33 to 57 (EGAALRAQSQKTASANATTGQRTKS) is disordered. Polar residues predominate over residues 39–54 (AQSQKTASANATTGQR). Residues glycine 98, aspartate 119, 126–130 (SNLHR), lysine 143, and 187–188 (DN) each bind ATP. Residues cysteine 236 and cysteine 239 each coordinate Zn(2+). Catalysis depends on cysteine 253, which acts as the Glycyl thioester intermediate; for adenylyltransferase activity. Cysteine 315 and cysteine 318 together coordinate Zn(2+). The Rhodanese domain occupies 366–480 (AGAQRHIIDV…WREQVDPDWP (115 aa)). Residue cysteine 435 is the Cysteine persulfide intermediate; for sulfurtransferase activity of the active site.

The protein in the N-terminal section; belongs to the HesA/MoeB/ThiF family. UBA4 subfamily. Zn(2+) is required as a cofactor.

It localises to the cytoplasm. It is found in the cytosol. The enzyme catalyses [molybdopterin-synthase sulfur-carrier protein]-C-terminal Gly-Gly + ATP + H(+) = [molybdopterin-synthase sulfur-carrier protein]-C-terminal Gly-Gly-AMP + diphosphate. It catalyses the reaction [molybdopterin-synthase sulfur-carrier protein]-C-terminal Gly-Gly-AMP + S-sulfanyl-L-cysteinyl-[cysteine desulfurase] + AH2 = [molybdopterin-synthase sulfur-carrier protein]-C-terminal-Gly-aminoethanethioate + L-cysteinyl-[cysteine desulfurase] + A + AMP + 2 H(+). The protein operates within tRNA modification; 5-methoxycarbonylmethyl-2-thiouridine-tRNA biosynthesis. It participates in cofactor biosynthesis; molybdopterin biosynthesis. Its function is as follows. Plays a central role in 2-thiolation of mcm(5)S(2)U at tRNA wobble positions of cytosolic tRNA(Lys), tRNA(Glu) and tRNA(Gln). Also essential during biosynthesis of the molybdenum cofactor. Acts by mediating the C-terminal thiocarboxylation of sulfur carriers urm1 and mocs2a. Its N-terminus first activates urm1 and mocs2a as acyl-adenylates (-COAMP), then the persulfide sulfur on the catalytic cysteine is transferred to urm1 and mocs2a to form thiocarboxylation (-COSH) of their C-terminus. The reaction probably involves hydrogen sulfide that is generated from the persulfide intermediate and that acts as a nucleophile towards urm1 and mocs2a. Subsequently, a transient disulfide bond is formed. Does not use thiosulfate as sulfur donor; nfs1 probably acting as a sulfur donor for thiocarboxylation reactions. In Emericella nidulans (strain FGSC A4 / ATCC 38163 / CBS 112.46 / NRRL 194 / M139) (Aspergillus nidulans), this protein is Adenylyltransferase and sulfurtransferase uba4.